A 243-amino-acid chain; its full sequence is Amphiregulin (243 aa).

The signal sequence occupies residues 1 to 24 (MRTPSLSLALSVLSLLVLGSGHYA). Residues 25–96 (AGLELNGTSS…IVDDSVRVEQ (72 aa)) constitute a propeptide that is removed on maturation. N-linked (GlcNAc...) asparagine glycosylation occurs at asparagine 30. Positions 55–67 (STISEMPSGSELS) are enriched in polar residues. Disordered stretches follow at residues 55–75 (STISEMPSGSELSTGDYDYSE) and 98–135 (IKPKENKTEGEKSSEKPKRKKKGGKGGKGRRNRKKKKN). Basic and acidic residues predominate over residues 98–113 (IKPKENKTEGEKSSEK). A glycan (N-linked (GlcNAc...) asparagine) is linked at asparagine 103. Over residues 114-135 (PKRKKKGGKGGKGRRNRKKKKN) the composition is skewed to basic residues. The EGF-like domain occupies 133–173 (KKNPCAAKFQNFCIHGECRYIENLEVVTCHCHQDYFGERCG). Disulfide bonds link cysteine 137/cysteine 150, cysteine 145/cysteine 161, and cysteine 163/cysteine 172. A helical membrane pass occupies residues 190 to 213 (IALAAIIVFVSAVSVAAIGIITAV). An N-linked (GlcNAc...) asparagine glycan is attached at asparagine 236.

This sequence belongs to the amphiregulin family. In terms of assembly, the immature precursor interacts with CNIH.

The protein resides in the membrane. Functionally, ligand of the EGF receptor/EGFR. Autocrine growth factor as well as a mitogen for a broad range of target cells including astrocytes, Schwann cells and fibroblasts. In Rattus norvegicus (Rat), this protein is Amphiregulin (Areg).